The sequence spans 181 residues: Probable toxin TacT (181 aa).

It belongs to the acetyltransferase family. As to quaternary structure, forms a complex with cognate antitoxin TacA.

Its function is as follows. Probable toxin component of a type II toxin-antitoxin (TA) system. Might acetylate tRNA and inhibit translation. Should be neutralized by cognate antitoxin TacA (y4aR). In Sinorhizobium fredii (strain NBRC 101917 / NGR234), this protein is Probable toxin TacT.